The following is a 103-amino-acid chain: Small ribosomal subunit protein uS10 (103 aa).

This sequence belongs to the universal ribosomal protein uS10 family. In terms of assembly, part of the 30S ribosomal subunit.

Its function is as follows. Involved in the binding of tRNA to the ribosomes. The protein is Small ribosomal subunit protein uS10 of Buchnera aphidicola subsp. Acyrthosiphon pisum (strain 5A).